A 265-amino-acid chain; its full sequence is Indole-3-glycerol phosphate synthase (265 aa).

The protein belongs to the TrpC family.

It catalyses the reaction 1-(2-carboxyphenylamino)-1-deoxy-D-ribulose 5-phosphate + H(+) = (1S,2R)-1-C-(indol-3-yl)glycerol 3-phosphate + CO2 + H2O. It functions in the pathway amino-acid biosynthesis; L-tryptophan biosynthesis; L-tryptophan from chorismate: step 4/5. The protein is Indole-3-glycerol phosphate synthase of Desulforamulus reducens (strain ATCC BAA-1160 / DSM 100696 / MI-1) (Desulfotomaculum reducens).